Consider the following 397-residue polypeptide: ORC1-type DNA replication protein 1 (397 aa).

Residues 67–71 (TGKTA), Tyr-208, and Arg-220 each bind ATP.

This sequence belongs to the CDC6/cdc18 family.

Its function is as follows. Involved in regulation of DNA replication. The protein is ORC1-type DNA replication protein 1 (cdc6-1) of Sulfolobus acidocaldarius (strain ATCC 33909 / DSM 639 / JCM 8929 / NBRC 15157 / NCIMB 11770).